The following is a 457-amino-acid chain: tRNA modification GTPase MnmE (457 aa).

3 residues coordinate (6S)-5-formyl-5,6,7,8-tetrahydrofolate: arginine 22, glutamate 86, and arginine 125. In terms of domain architecture, TrmE-type G spans 221 to 381; that stretch reads GLRAVLAGRP…LEAEVARVAG (161 aa). A K(+)-binding site is contributed by asparagine 231. Residues 231–236, 250–256, and 275–278 contribute to the GTP site; these read NVGKSS, TPIPGTT, and DTAG. Serine 235 is a binding site for Mg(2+). 3 residues coordinate K(+): threonine 250, isoleucine 252, and threonine 255. Position 256 (threonine 256) interacts with Mg(2+). A (6S)-5-formyl-5,6,7,8-tetrahydrofolate-binding site is contributed by lysine 457.

It belongs to the TRAFAC class TrmE-Era-EngA-EngB-Septin-like GTPase superfamily. TrmE GTPase family. As to quaternary structure, homodimer. Heterotetramer of two MnmE and two MnmG subunits. K(+) serves as cofactor.

It is found in the cytoplasm. Its function is as follows. Exhibits a very high intrinsic GTPase hydrolysis rate. Involved in the addition of a carboxymethylaminomethyl (cmnm) group at the wobble position (U34) of certain tRNAs, forming tRNA-cmnm(5)s(2)U34. The polypeptide is tRNA modification GTPase MnmE (Symbiobacterium thermophilum (strain DSM 24528 / JCM 14929 / IAM 14863 / T)).